Here is a 285-residue protein sequence, read N- to C-terminus: Phosphatidate cytidylyltransferase (285 aa).

8 helical membrane passes run 10-30 (FVLI…GFAI), 56-76 (VWLA…LPEY), 93-113 (LGWW…AAIW), 121-141 (LIFG…LRAW), 151-171 (AIWL…AYMF), 190-210 (WQGF…YGMW), 213-233 (LDVA…ASVL), and 264-284 (IDSL…VFRT).

The protein belongs to the CDS family.

The protein localises to the cell inner membrane. It catalyses the reaction a 1,2-diacyl-sn-glycero-3-phosphate + CTP + H(+) = a CDP-1,2-diacyl-sn-glycerol + diphosphate. It functions in the pathway phospholipid metabolism; CDP-diacylglycerol biosynthesis; CDP-diacylglycerol from sn-glycerol 3-phosphate: step 3/3. This is Phosphatidate cytidylyltransferase (cdsA) from Escherichia coli O157:H7.